We begin with the raw amino-acid sequence, 1820 residues long: Sodium channel protein (1820 aa).

The Cytoplasmic portion of the chain corresponds to 1 to 117; it reads MARKFSSARP…FNPIRRGAIR (117 aa). The I repeat unit spans residues 108 to 410; it reads FNPIRRGAIR…VAMAYEEQNQ (303 aa). Residues 118–138 form a helical membrane-spanning segment; the sequence is VFVNSAFNFFIMFTIFSNCIF. At 139 to 149 the chain is on the extracellular side; sequence MTISNPPAWSK. A helical membrane pass occupies residues 150-171; the sequence is IVEYTFTGIYTFEVIVKVLSRG. The Cytoplasmic segment spans residues 172 to 176; it reads FCIGH. A helical membrane pass occupies residues 177-197; that stretch reads FTFLRDPWNWLDFSVVTMTYI. At 198–203 the chain is on the extracellular side; the sequence is TEFIDL. A helical; Voltage-sensor membrane pass occupies residues 204 to 224; it reads RNVSALRTFRVLRALKTITIF. The Cytoplasmic segment spans residues 225 to 243; sequence PGLKTIVRALIESMKQMGD. A helical transmembrane segment spans residues 244 to 264; that stretch reads VVILTVFSLAVFTLAGMQLFM. At 265-346 the chain is on the extracellular side; sequence GNLRHKCIRW…PNYGYTNYDN (82 aa). A disulfide bond links cysteine 271 and cysteine 324. Residues asparagine 278, asparagine 288, and asparagine 317 are each glycosylated (N-linked (GlcNAc...) asparagine). The segment at 285-342 is non-homologous region of repeat I; it reads SAYNTTFDFTAYIENEENQYFLDGALDALLCGNNSDAGKCPEGYTCMKAGRNPNYGYT. An intramembrane region (pore-forming) is located at residues 347–371; sequence FAWTFLCLFRLMLQDYWENLYQMTL. Topologically, residues 372 to 378 are extracellular; that stretch reads RAAGKSY. Residues 379–402 traverse the membrane as a helical segment; it reads MVFFIMVIFLGSFYLINLILAVVA. At 403-557 the chain is on the cytoplasmic side; that stretch reads MAYEEQNQAT…CCGPWVFLKK (155 aa). A disordered region spans residues 483–507; the sequence is SVKLSTEEQRSDSKSMDSKHSVDKP. The span at 487–507 shows a compositional bias: basic and acidic residues; the sequence is STEEQRSDSKSMDSKHSVDKP. Residues 548 to 811 form an II repeat; it reads CCGPWVFLKK…EEDDEVNSLQ (264 aa). A helical membrane pass occupies residues 558–578; the sequence is WVHFVMMDPFTDLFITLCIIL. Over 579–599 the chain is Extracellular; it reads NTLFMSIEHHPMNESFQSLLS. N-linked (GlcNAc...) asparagine glycosylation occurs at asparagine 591. The chain crosses the membrane as a helical span at residues 600 to 620; sequence AGNLVFTTIFAAEMVLKIIAL. The Cytoplasmic portion of the chain corresponds to 621 to 625; that stretch reads DPYYY. Residues 626–643 form a helical membrane-spanning segment; it reads FQQTWNIFDSIIVSLSLL. The Extracellular portion of the chain corresponds to 644 to 650; that stretch reads ELGLSNM. The chain crosses the membrane as a helical; Voltage-sensor span at residues 651–671; sequence QGMSVLRSLRLLRIFKLAKSW. The Cytoplasmic segment spans residues 672-690; that stretch reads PTLNILIKIICNSVGALGN. Residues 691–711 form a helical membrane-spanning segment; the sequence is LTIVLAIIVFIFALVGFQLFG. At 712–734 the chain is on the extracellular side; that stretch reads KNYKEYVCKISDDCELPRWHMND. Positions 735 to 755 form an intramembrane region, pore-forming; that stretch reads FFHSFLIVFRALCGEWIETMW. The Extracellular segment spans residues 756-766; the sequence is DCMEVGGVPMC. Cysteines 757 and 766 form a disulfide. The chain crosses the membrane as a helical span at residues 767–790; that stretch reads LAVYMMVIIIGNLVMLNLFLALLL. Residues 791 to 1004 lie on the Cytoplasmic side of the membrane; it reads SSFSSDNLSS…TIVEHDYFET (214 aa). Disordered regions lie at residues 844 to 864 and 891 to 959; these read PPSD…DTLP and VKGE…SKDP. Acidic residues predominate over residues 896–910; that stretch reads EIEEEGLVDSSDEED. Over residues 924–935 the composition is skewed to polar residues; sequence SVCSTVDYSPSE. Acidic residues predominate over residues 942 to 953; that stretch reads EEEEEEEEEPEE. The stretch at 988 to 1295 is one III repeat; it reads NLRRTCYTIV…KKYYNAMKKL (308 aa). The chain crosses the membrane as a helical span at residues 1005–1025; the sequence is FIIFMILLSSGVLAFEDIYIW. At 1026 to 1037 the chain is on the extracellular side; it reads RRRVIKVILEYA. A helical transmembrane segment spans residues 1038-1058; that stretch reads DKVFTYVFIVEMLLKWVAYGF. Residues 1059–1065 lie on the Cytoplasmic side of the membrane; the sequence is KRYFTDA. The helical transmembrane segment at 1066-1086 threads the bilayer; sequence WCWLDFVIVGASIMGITSSLL. Topologically, residues 1087-1091 are extracellular; it reads GYEEL. Residues 1092-1112 form a helical; Voltage-sensor membrane-spanning segment; the sequence is GAIKNLRTIRALRPLRALSRF. The Cytoplasmic portion of the chain corresponds to 1113–1131; the sequence is EGMKVVVRALLGAIPSIMN. A helical membrane pass occupies residues 1132-1152; sequence VLLVCLMFWLIFSIMGVNLFA. Over 1153 to 1199 the chain is Extracellular; sequence GKFYRCINTTTDEILPVEEVNNRSDCMALMYTNEVRWVNLKVNYDNA. Asparagine 1160 and asparagine 1174 each carry an N-linked (GlcNAc...) asparagine glycan. A non-homologous region of repeat III region spans residues 1172-1194; that stretch reads VNNRSDCMALMYTNEVRWVNLKV. The segment at residues 1200–1221 is an intramembrane region (pore-forming); that stretch reads GMGYLSLLQVSTFKGWMDIMYA. At 1222–1243 the chain is on the extracellular side; sequence AVDSREVEDQPIYEINVYMYLY. The chain crosses the membrane as a helical span at residues 1244–1264; that stretch reads FVIFIVFGAFFTLNLFIGVII. Over 1265 to 1320 the chain is Cytoplasmic; sequence DNFNRQKQKLGGEDLFMTEEQKKYYNAMKKLGSKKAAKCIPRPSNVVQGVVYDIVT. The IV repeat unit spans residues 1304–1602; that stretch reads IPRPSNVVQG…WHKFDVHGTQ (299 aa). Residues 1321 to 1341 form a helical membrane-spanning segment; that stretch reads QPFTDIFIMALICINMVAMMV. Topologically, residues 1342–1352 are extracellular; sequence ESEDQSQVKKD. A helical membrane pass occupies residues 1353 to 1376; that stretch reads ILSQINVIFVIIFTVECLLKLLAL. At 1377-1380 the chain is on the cytoplasmic side; it reads RQYF. The helical transmembrane segment at 1381 to 1398 threads the bilayer; it reads FTVGWNVFDFAVVVISII. Residues 1399 to 1416 are Extracellular-facing; sequence GLLLSDIIEKYFVSPTLF. Residues 1417–1437 form a helical; Voltage-sensor membrane-spanning segment; sequence RVIRLARIARVLRLIRAAKGI. The Cytoplasmic segment spans residues 1438 to 1453; it reads RTLLFALMMSLPALFN. Residues 1454 to 1474 form a helical membrane-spanning segment; that stretch reads IGLLLFLIMFIFSIFGMSNFA. The Extracellular segment spans residues 1475–1490; it reads YVKKQGGVDDIFNFET. The segment at 1490-1505 is non-homologous region of repeat IV; that stretch reads TFGNSMICLFEITTSA. The pore-forming intramembrane region spans 1491 to 1513; sequence FGNSMICLFEITTSAGWDGLLLP. Residues 1514 to 1543 are Extracellular-facing; that stretch reads TLNTGPPDCDPDVENPGTDVRGNCGNPGKG. Residues 1544–1567 form a helical membrane-spanning segment; it reads ITFFCSYIILSFLVVVNMYIAIIL. The Cytoplasmic segment spans residues 1568–1820; it reads ENFGVAQEES…GAIVVRESIV (253 aa).

This sequence belongs to the sodium channel (TC 1.A.1.10) family.

It is found in the cell membrane. Its function is as follows. Mediates the voltage-dependent sodium ion permeability of excitable membranes. Assuming opened or closed conformations in response to the voltage difference across the membrane, the protein forms a sodium-selective channel through which Na(+) ions may pass in accordance with their electrochemical gradient. The sequence is that of Sodium channel protein from Electrophorus electricus (Electric eel).